A 307-amino-acid chain; its full sequence is MNDTIPATGHLLGAADIRRIAADAGISPTKKFGQNFVIDPGTVRRIVREAGVTAANHVMEVGPGLGSLTLAILETGATMTAVEIDPPLAERLPGTVAEFMPEATSRLTVVNRDALTVTPENVPDFSDDASFTLVANLPYNVATPILLTLLERFDNLGSFLVMVQKEVADRLAAKPGSKIYGTPSVKLAWYGTAERVGTIGRNVFWPAPNVDSALVKFTRYQADDPAAPGTANSTDDGTQRELVFRLIDAAFGQRRKTLHAALKTIAPSEAFSIAGIDPTRRGETLTIAEFTALAKAIESCGDGDEAQ.

Residues asparagine 35, valine 37, glycine 62, glutamate 83, aspartate 113, and asparagine 136 each contribute to the S-adenosyl-L-methionine site.

This sequence belongs to the class I-like SAM-binding methyltransferase superfamily. rRNA adenine N(6)-methyltransferase family. RsmA subfamily.

The protein resides in the cytoplasm. The catalysed reaction is adenosine(1518)/adenosine(1519) in 16S rRNA + 4 S-adenosyl-L-methionine = N(6)-dimethyladenosine(1518)/N(6)-dimethyladenosine(1519) in 16S rRNA + 4 S-adenosyl-L-homocysteine + 4 H(+). Functionally, specifically dimethylates two adjacent adenosines (A1518 and A1519) in the loop of a conserved hairpin near the 3'-end of 16S rRNA in the 30S particle. May play a critical role in biogenesis of 30S subunits. In Bifidobacterium longum (strain DJO10A), this protein is Ribosomal RNA small subunit methyltransferase A.